Reading from the N-terminus, the 4115-residue chain is Transcription-associated protein 1 (4115 aa).

The segment covering 1 to 11 (MDPSIPSTSHR) has biased composition (polar residues). 2 disordered regions span residues 1–21 (MDPS…GVQP) and 543–563 (ESEQ…KKTS). Over residues 544 to 563 (SEQKRNELPTPTKEHTKKTS) the composition is skewed to basic and acidic residues. 2 TPR repeats span residues 1341 to 1374 (LDGL…LLDL) and 1820 to 1853 (QDYD…EVIP). A disordered region spans residues 2678–2701 (LEEPEPMEVDQPKNAPAEEPKDNK). Positions 2808–3421 (LIEFISSKHE…SNGASKVSKS (614 aa)) constitute an FAT domain. A TPR 3 repeat occupies 2855 to 2888 (IETLESLGALYKELAEFDQYSAIWERRSVFPETM). The 361-residue stretch at 3740-4100 (EPYFEIVMRG…CNSLIIRAKD (361 aa)) folds into the PI3K/PI4K catalytic domain. Positions 3746-3752 (VMRGGQV) are G-loop. The interval 3959–3967 (NLSPMTPHQ) is catalytic loop. Positions 3979 to 4006 (NPFYRFELGTGQLMDIEHFAHEVPFRLT) are activation loop. The FATC domain maps to 4083–4115 (DAKVKKDDCNSLIIRAKDSDNLSRMPPTYHAWF).

The protein belongs to the PI3/PI4-kinase family. TRA1 subfamily.

The protein resides in the nucleus. In terms of biological role, influences germ cell fate in hermaphrodites. Acts downstream of tra-2 and tra-3 and through the Tip60 histone acetyltransferase complex to regulate germ cell fate decisions. Required for spermatogenesis and embryonic development. Acts with tra-2 to promote expression of fog-3 and control male tail development. Involved in the negative regulation of vulval development. The chain is Transcription-associated protein 1 from Caenorhabditis briggsae.